The chain runs to 875 residues: ATP-dependent helicase Lhr-Core (875 aa).

ATP contacts are provided by Gln35, Lys58, Thr59, Asp173, Glu174, Ile355, Arg372, and His375. In terms of domain architecture, Helicase ATP-binding spans Ile39–Arg230. The short motif at Asp173 to His176 is the DEIH box element. Residues Pro247–Asp419 form the Helicase C-terminal domain. Residues Val420 to Pro506 form a WH domain region. The interval Asp507–Val875 is domain 4.

This sequence belongs to the Lhr helicase family. Lhr-Core subfamily. As to quaternary structure, monomer and homodimer. The monomeric form has helicase, ATPase and strand annealing activities, while the dimeric form only has ATPAse and strand annealing activities. Interacts with DNA topoisomerase 3 (topA).

The catalysed reaction is Couples ATP hydrolysis with the unwinding of duplex DNA by translocating in the 3'-5' direction.. The enzyme catalyses ATP + H2O = ADP + phosphate + H(+). With respect to regulation, DNA topoisomerase 3 (topA) inhibits helicase activity on Holliday junctions (HJ) but has no effect on ATPase activity. Functionally, DNA helicase that translocates in a 3'-5' direction on single-stranded (ss)DNA, probably involved in DNA repair. Unwinds DNA in a 3'-5' direction, unwinding is ATP-dependent, acts preferentially on fork and 3'-tailed DNA; bubble and blunt-ended double-stranded (ds)DNA are not substrates. Has winding and unwinding activity, unwinds Holliday junction (HJ) DNA in the presence of ATP, the main product is forked DNA, single-stranded binding protein (SSB) does not stimulate activity. Anneals complementary oligonucleotides in an ATP-independent manner to form HJ and fork structures, thus can perform strand exchange. Preferentially binds HJ, forked and ssDNA, dsDNA is bound less well. LhrC-Core (Hel112) inhibits the exonuclease activity of the HerA-NurA complex on ss- and dsDNA, has no effect on ssDNA nicking by NurA; HerA-NurA are involved in DNA end-resection during DNA double-strand break repair. The polypeptide is ATP-dependent helicase Lhr-Core (Saccharolobus solfataricus (strain ATCC 35092 / DSM 1617 / JCM 11322 / P2) (Sulfolobus solfataricus)).